A 61-amino-acid polypeptide reads, in one-letter code: Conotoxin 3 (61 aa).

The first 21 residues, methionine 1–alanine 21, serve as a signal peptide directing secretion. Positions valine 22–asparagine 48 are excised as a propeptide. Tryptophan 58 is modified (6'-bromotryptophan).

The protein belongs to the conotoxin T superfamily. In terms of processing, contains 2 disulfide bonds that can be either 'C1-C3, C2-C4' or 'C1-C4, C2-C3', since these disulfide connectivities have been observed for conotoxins with cysteine framework V (for examples, see AC P0DQQ7 and AC P81755). Contains 2 disulfide bonds. Expressed by the venom duct.

Its subcellular location is the secreted. The chain is Conotoxin 3 from Conus textile (Cloth-of-gold cone).